Here is a 1401-residue protein sequence, read N- to C-terminus: Lysine-specific demethylase 6A (1401 aa).

An interaction with SUPT6H region spans residues 1–1095 (MKSCGVSLAT…TNIDLSDDKK (1095 aa)). TPR repeat units follow at residues 93 to 126 (SDFF…QSDY), 130 to 163 (AAFL…DPSF), 170 to 199 (HLRL…DCNP), 205 to 238 (AEIQ…ENLS), 250 to 283 (GWMH…DPNS), 284 to 317 (GQSW…SEAS), 318 to 351 (ADTW…DHGH), and 352 to 385 (AAAW…KSCS). Residues 437–449 (AMNTAQQNTSDNW) are compositionally biased toward polar residues. The tract at residues 437–457 (AMNTAQQNTSDNWSGGHAVSH) is disordered. An Omega-N-methylarginine modification is found at Arg519. A disordered region spans residues 521-541 (TGIPNGPTADSSLPTNSVSGQ). Residue Arg549 is modified to Omega-N-methylarginine. 2 stretches are compositionally biased toward polar residues: residues 624–652 (LTSS…SHSA) and 660–724 (LSST…SGNI). Disordered regions lie at residues 624-746 (LTSS…SVEG), 758-778 (AVCS…SDNP), 810-864 (KTDN…ESQS), 914-940 (LLDK…NPPT), and 1043-1079 (FQES…KGPF). Ser769 carries the phosphoserine modification. Residues 814–833 (SVASSPSSAISTATPSPKST) show a composition bias toward low complexity. Thr827 is subject to Phosphothreonine. Ser829 carries the phosphoserine modification. Polar residues predominate over residues 834–848 (EQTTTNSVTSLNSPH). The segment covering 918 to 931 (CPPPRPPSSPYPPL) has biased composition (pro residues). Residues 1046 to 1063 (SLREENEKRSHHKDHSDS) show a composition bias toward basic and acidic residues. The region spanning 1095–1258 (KWKLQLHELT…YKLAVERYEW (164 aa)) is the JmjC domain. Fe cation is bound by residues His1146, Glu1148, and His1226. 4 residues coordinate Zn(2+): Cys1331, Cys1334, Cys1358, and Cys1361.

It belongs to the UTX family. Interacts with TLE1. Component of the MLL2/3 complex (also named ASCOM complex), at least composed of KMT2D/MLL2 or KMT2C/MLL3, ASH2L, RBBP5, WDR5, NCOA6, DPY30, KDM6A (or KDM6B), PAXIP1/PTIP, PAGR1 and alpha- and beta-tubulin. Interacts with SUPT6H. Interacts with SMARCA4. Interacts with PROSER1. The cofactor is L-ascorbate. Fe(2+) is required as a cofactor.

It is found in the nucleus. The enzyme catalyses N(6),N(6),N(6)-trimethyl-L-lysyl(27)-[histone H3] + 2 2-oxoglutarate + 2 O2 = N(6)-methyl-L-lysyl(27)-[histone H3] + 2 formaldehyde + 2 succinate + 2 CO2. Functionally, histone demethylase that specifically demethylates 'Lys-27' of histone H3, thereby playing a central role in histone code. Demethylates trimethylated and dimethylated but not monomethylated H3 'Lys-27'. Plays a central role in regulation of posterior development, by regulating HOX gene expression. Demethylation of 'Lys-27' of histone H3 is concomitant with methylation of 'Lys-4' of histone H3, and regulates the recruitment of the PRC1 complex and monoubiquitination of histone H2A. Plays a demethylase-independent role in chromatin remodeling to regulate T-box family member-dependent gene expression. This Homo sapiens (Human) protein is Lysine-specific demethylase 6A (KDM6A).